The following is a 110-amino-acid chain: uncharacterized protein (110 aa).

The disordered stretch occupies residues 1–72; sequence MWRSSNQRGV…NHRNIHLRNP (72 aa). Basic residues predominate over residues 10–23; that stretch reads VSRRRDKSMRKYTR. Positions 48–57 are enriched in polar residues; sequence KNTYTGNISS.

This is an uncharacterized protein from Human herpesvirus 6A (strain Uganda-1102) (HHV-6 variant A).